The chain runs to 541 residues: Phosphoenolpyruvate carboxykinase (ATP) (541 aa).

3 residues coordinate substrate: arginine 67, tyrosine 207, and lysine 213. Residues lysine 213, histidine 232, and 248 to 256 each bind ATP; that span reads GLSGTGKTT. Residues lysine 213 and histidine 232 each contribute to the Mn(2+) site. Position 269 (aspartate 269) interacts with Mn(2+). ATP-binding positions include glutamate 297, arginine 333, 449–450, and threonine 455; that span reads RI. Arginine 333 serves as a coordination point for substrate.

This sequence belongs to the phosphoenolpyruvate carboxykinase (ATP) family. As to quaternary structure, monomer. The cofactor is Mn(2+).

The protein resides in the cytoplasm. It carries out the reaction oxaloacetate + ATP = phosphoenolpyruvate + ADP + CO2. Its pathway is carbohydrate biosynthesis; gluconeogenesis. In terms of biological role, involved in the gluconeogenesis. Catalyzes the conversion of oxaloacetate (OAA) to phosphoenolpyruvate (PEP) through direct phosphoryl transfer between the nucleoside triphosphate and OAA. The protein is Phosphoenolpyruvate carboxykinase (ATP) of Vibrio atlanticus (strain LGP32) (Vibrio splendidus (strain Mel32)).